A 280-amino-acid chain; its full sequence is Undecaprenyl-diphosphatase (280 aa).

Helical transmembrane passes span 1-21, 45-65, 90-110, 115-135, 151-171, 226-246, and 260-280; these read MTLL…PFPV, FLPF…GVFW, IFGL…LLEH, VFGT…LLMV, IATL…LALL, IMVQ…ICSL, and LTPF…VILL.

The protein belongs to the UppP family.

It is found in the cell inner membrane. It catalyses the reaction di-trans,octa-cis-undecaprenyl diphosphate + H2O = di-trans,octa-cis-undecaprenyl phosphate + phosphate + H(+). Its function is as follows. Catalyzes the dephosphorylation of undecaprenyl diphosphate (UPP). Confers resistance to bacitracin. The protein is Undecaprenyl-diphosphatase of Gluconobacter oxydans (strain 621H) (Gluconobacter suboxydans).